We begin with the raw amino-acid sequence, 131 residues long: Small ribosomal subunit protein uS8 (131 aa).

The protein belongs to the universal ribosomal protein uS8 family. Part of the 30S ribosomal subunit. Contacts proteins S5 and S12.

Its function is as follows. One of the primary rRNA binding proteins, it binds directly to 16S rRNA central domain where it helps coordinate assembly of the platform of the 30S subunit. In Shewanella amazonensis (strain ATCC BAA-1098 / SB2B), this protein is Small ribosomal subunit protein uS8.